Reading from the N-terminus, the 279-residue chain is ATP-dependent Clp protease proteolytic subunit-related protein 2, chloroplastic (279 aa).

The N-terminal 54 residues, 1-54, are a transit peptide targeting the chloroplast; that stretch reads MAVSFNTTLHQPSLSPSCSIKLYSGLKPQSASFLASGYQNLNKEFYGRVYKSLQ.

Belongs to the peptidase S14 family. In terms of assembly, component of the chloroplastic Clp protease core complex which consist of at least 16 proteins: CLPP4 (3 copies), CLPP5 (3 copies), CLPR4 (2 copies), ClpP1 (1 copy), CLPP6 (1 copy), CLPR2 (1 copy), CLPT1 (1 copy), CLPT2 (1 copy) and 3 copies of CLPP3 and/or CLPR1 and/or CLPR3. The core complex is organized in two heptameric rings, one containing CLPP3,4,5,6 in a 1:2:3:1 ratio and the other CLPP1 and CLPR1,2,3,4 in a 3:1:1:1:1 ratio. In terms of tissue distribution, expressed at least in leaves and roots.

It localises to the plastid. Its subcellular location is the chloroplast. Functionally, required for chloroplast development and integrity. Involved in the regulation of plastoglobules formation. The polypeptide is ATP-dependent Clp protease proteolytic subunit-related protein 2, chloroplastic (Arabidopsis thaliana (Mouse-ear cress)).